The primary structure comprises 267 residues: Large ribosomal subunit protein uL4 (267 aa).

Belongs to the universal ribosomal protein uL4 family. As to quaternary structure, part of the 50S ribosomal subunit.

Its function is as follows. One of the primary rRNA binding proteins, this protein initially binds near the 5'-end of the 23S rRNA. It is important during the early stages of 50S assembly. It makes multiple contacts with different domains of the 23S rRNA in the assembled 50S subunit and ribosome. In terms of biological role, forms part of the polypeptide exit tunnel. The protein is Large ribosomal subunit protein uL4 of Saccharolobus islandicus (strain L.S.2.15 / Lassen #1) (Sulfolobus islandicus).